We begin with the raw amino-acid sequence, 360 residues long: Magnesium-protoporphyrin IX monomethyl ester [oxidative] cyclase (360 aa).

Residues 1–21 (MPPTAVTEATAVPGSNVTTKD) form a disordered region.

Belongs to the AcsF family. The cofactor is Fe cation.

The catalysed reaction is Mg-protoporphyrin IX 13-monomethyl ester + 3 NADPH + 3 O2 + 2 H(+) = 3,8-divinyl protochlorophyllide a + 3 NADP(+) + 5 H2O. It functions in the pathway porphyrin-containing compound metabolism; chlorophyll biosynthesis (light-independent). Functionally, catalyzes the formation of the isocyclic ring in chlorophyll biosynthesis. Mediates the cyclase reaction, which results in the formation of divinylprotochlorophyllide (Pchlide) characteristic of all chlorophylls from magnesium-protoporphyrin IX 13-monomethyl ester (MgPMME). The protein is Magnesium-protoporphyrin IX monomethyl ester [oxidative] cyclase of Synechococcus sp. (strain CC9311).